Consider the following 1127-residue polypeptide: MVLSGVDKMIRLQKNTANIRNICVLAHVDHGKTTLADCLISSNGIISSRLAGKLRYMDSREDEQVRGITMKSSAISLHYAEGHEEYLINLIDSPGHVDFSSEVSTAVRICDGCIIVVDAVEGVCPQTQAVLRQAWLENIRPVLVINKIDRLIVELKFTPQEAYSHLKNILEQINALTGTLFTSKVLEERAERETESQAKPHSEQGEQVYDWSAGLEDVDDSQLYFSPEQGNVVFTSAIDGWGFGIEHFARIYSQKIGIKKEVLLKTLWGDYYINMKAKKIMKVDQAKGKKPLFVQLILENIWSLYDAVLKKDKEKIDKIVTSLGLKIGAREARHSDPKVQINAICSQWLPISHAVLAMVCHKLPSPLDMTSERVEKLLCTGSQTFESLPPETQALKAAFMKCGSEDTAPVIIFVSKMFAVDVKALPQNKPRPLTQEEMAQRRERARQRHAEKLAAAQGQTSQGPTQDGGALETSPHEDEPRGDEPDVASVSRQPVSQEESSQEAFIAFARVFSGIARRGKKIFVLGPKYSPVDFLQRVPLGFSAPLEDLPPVPHMACCTLENLYLLMGRELEDLEEVPPGNVLGIGGLQDFVLKSATLCSLPSCPPFIPLNFEATPIVRVAVEPKHPSEMPQLVKGMKLLNQADPCVQVLIQETGEHVLVTAGEVHLQRCLDDLRERFAKIHISVSEPIIPFRETITKPPKVDMVNEEIGRQQKVAVIHQTKEEQSKIPEGIHVDSDGLITIPTPNKLATLSVRAIPLPEEVTRILEENSDLIRSMELLTSSLNEGRNTQAIHQKTQEKIWEFKGKLEKHLTGRKWRNTVDQIWSFGPRKCGPNILVSRSEDFQNSVWSGPAGRESKEASRFRDFGNSIVSGFQLATLSGPMCEEPLMGVCFVLEKWELNKCAEQGASDKQHQGQCDLAGEGQGGGKTCHVGDENQEQQDVCSEPFEETSQKGDSPVIDCYGPFSGQLIATMKEACRYALQVKPQRLMAAMYTCDIMATSDVLGRVYAVLSKREGRVLQEEMKEGTDMFIIKAVLPVAESFGFADEIRKRTSGLASPQLVFSHWEVIPSDPFWVPTTEEEYLHFGEKADSENQARKYMNAVRKRKGLYVEEKIVEHAEKQRTLSKNK.

The 256-residue stretch at 17-272 folds into the tr-type G domain; that stretch reads ANIRNICVLA…LLKTLWGDYY (256 aa). Residues 26-33, 92-96, and 146-149 each bind GTP; these read AHVDHGKT, DSPGH, and NKID. Residues 429 to 496 form a disordered region; it reads KPRPLTQEEM…VASVSRQPVS (68 aa). Composition is skewed to basic and acidic residues over residues 438–452 and 474–484; these read MAQRRERARQRHAEK and SPHEDEPRGDE. Lys528 is modified (N6-acetyllysine).

Belongs to the TRAFAC class translation factor GTPase superfamily. Classic translation factor GTPase family. In terms of assembly, associates with the 60S ribosomal subunit. Found in a complex consisting of the 60S ribosomal subunit, SBDS and EFL1.

It carries out the reaction GTP + H2O = GDP + phosphate + H(+). Its activity is regulated as follows. GTPase activity is stimulated in the presence of 60S ribosome subunits. GTPase involved in the biogenesis of the 60S ribosomal subunit and translational activation of ribosomes. Together with SBDS, triggers the GTP-dependent release of EIF6 from 60S pre-ribosomes in the cytoplasm, thereby activating ribosomes for translation competence by allowing 80S ribosome assembly and facilitating EIF6 recycling to the nucleus, where it is required for 60S rRNA processing and nuclear export. This chain is Elongation factor-like GTPase 1 (Efl1), found in Mus musculus (Mouse).